The primary structure comprises 155 residues: 6,7-dimethyl-8-ribityllumazine synthase (155 aa).

5-amino-6-(D-ribitylamino)uracil contacts are provided by residues Phe23, 57-59, and 81-83; these read AFE and AVI. (2S)-2-hydroxy-3-oxobutyl phosphate is bound at residue 86–87; it reads ST. His89 serves as the catalytic Proton donor. Phe114 is a 5-amino-6-(D-ribitylamino)uracil binding site. Arg128 lines the (2S)-2-hydroxy-3-oxobutyl phosphate pocket.

The protein belongs to the DMRL synthase family.

It carries out the reaction (2S)-2-hydroxy-3-oxobutyl phosphate + 5-amino-6-(D-ribitylamino)uracil = 6,7-dimethyl-8-(1-D-ribityl)lumazine + phosphate + 2 H2O + H(+). The protein operates within cofactor biosynthesis; riboflavin biosynthesis; riboflavin from 2-hydroxy-3-oxobutyl phosphate and 5-amino-6-(D-ribitylamino)uracil: step 1/2. In terms of biological role, catalyzes the formation of 6,7-dimethyl-8-ribityllumazine by condensation of 5-amino-6-(D-ribitylamino)uracil with 3,4-dihydroxy-2-butanone 4-phosphate. This is the penultimate step in the biosynthesis of riboflavin. The protein is 6,7-dimethyl-8-ribityllumazine synthase of Dehalococcoides mccartyi (strain ATCC BAA-2100 / JCM 16839 / KCTC 5957 / BAV1).